A 418-amino-acid polypeptide reads, in one-letter code: CinA-like protein (418 aa).

This sequence belongs to the CinA family.

This Cyanothece sp. (strain PCC 7425 / ATCC 29141) protein is CinA-like protein.